A 36-amino-acid chain; its full sequence is Photosystem I reaction center subunit VIII (36 aa).

Residues 9–29 (ILVPLVGLIFPALSMALLFIY) traverse the membrane as a helical segment.

It belongs to the PsaI family.

It localises to the plastid. Its subcellular location is the chloroplast thylakoid membrane. Functionally, may help in the organization of the PsaL subunit. This Pyropia yezoensis (Susabi-nori) protein is Photosystem I reaction center subunit VIII.